The chain runs to 114 residues: Iron-sulfur cluster insertion protein ErpA (114 aa).

3 residues coordinate iron-sulfur cluster: C42, C106, and C108.

It belongs to the HesB/IscA family. As to quaternary structure, homodimer. Requires iron-sulfur cluster as cofactor.

Functionally, required for insertion of 4Fe-4S clusters for at least IspG. This is Iron-sulfur cluster insertion protein ErpA from Haemophilus ducreyi (strain 35000HP / ATCC 700724).